The primary structure comprises 399 residues: Argininosuccinate synthase (399 aa).

Residue Ala8 to Ser16 participates in ATP binding. The L-citrulline site is built by Tyr87 and Ser92. Gly117 provides a ligand contact to ATP. L-aspartate is bound by residues Thr119, Asn123, and Asp124. Asn123 is a binding site for L-citrulline. L-citrulline contacts are provided by Arg127, Ser176, Ser185, Glu261, and Tyr273.

The protein belongs to the argininosuccinate synthase family. Type 1 subfamily. In terms of assembly, homotetramer.

It localises to the cytoplasm. The enzyme catalyses L-citrulline + L-aspartate + ATP = 2-(N(omega)-L-arginino)succinate + AMP + diphosphate + H(+). It participates in amino-acid biosynthesis; L-arginine biosynthesis; L-arginine from L-ornithine and carbamoyl phosphate: step 2/3. The chain is Argininosuccinate synthase from Clostridioides difficile (strain 630) (Peptoclostridium difficile).